The chain runs to 146 residues: Hut operon positive regulatory protein (146 aa).

Belongs to the HutP family. As to quaternary structure, homohexamer.

Its function is as follows. Antiterminator that binds to cis-acting regulatory sequences on the mRNA in the presence of histidine, thereby suppressing transcription termination and activating the hut operon for histidine utilization. The chain is Hut operon positive regulatory protein from Bacillus cereus (strain G9842).